A 53-amino-acid chain; its full sequence is uncharacterized protein (53 aa).

Its subcellular location is the mitochondrion matrix. It localises to the kinetoplast. This is an uncharacterized protein from Trypanosoma brucei brucei.